Reading from the N-terminus, the 63-residue chain is Jingdongin-1-MT1 (63 aa).

The first 22 residues, 1–22 (MFTLKKSLLLLFFLGTINLSLC), serve as a signal peptide directing secretion. Positions 23–44 (EQERDADEEERRDDDEMDVEVE) are cleaved as a propeptide — removed in mature form. Cysteine 57 and cysteine 63 are oxidised to a cystine.

The protein belongs to the frog skin active peptide (FSAP) family. Brevinin subfamily. As to expression, expressed by the skin glands.

It is found in the secreted. In terms of biological role, antimicrobial peptide. Active against some Gram-negative and a variety of Gram-positive bacterial strains. Active against fungus C.glabrata 090902 but not against C.neoformans 201211. Shows hemolytic activity against human erythrocytes. In Amolops mantzorum (Sichuan torrent frog), this protein is Jingdongin-1-MT1.